Reading from the N-terminus, the 149-residue chain is Cytochrome c-type biogenesis protein CcmE (149 aa).

Residues 1–7 (MTRKQKR) are Cytoplasmic-facing. The chain crosses the membrane as a helical; Signal-anchor for type II membrane protein span at residues 8–28 (LAVIAGGVGFIMVAVLLVLFA). The Periplasmic portion of the chain corresponds to 29-149 (FGQSIAYFYM…GVWKGEGEAK (121 aa)). Residues H123 and Y127 each contribute to the heme site.

It belongs to the CcmE/CycJ family.

Its subcellular location is the cell inner membrane. In terms of biological role, heme chaperone required for the biogenesis of c-type cytochromes. Transiently binds heme delivered by CcmC and transfers the heme to apo-cytochromes in a process facilitated by CcmF and CcmH. This chain is Cytochrome c-type biogenesis protein CcmE, found in Allorhizobium ampelinum (strain ATCC BAA-846 / DSM 112012 / S4) (Agrobacterium vitis (strain S4)).